The following is a 1146-amino-acid chain: Probable phospholipid-transporting ATPase IIB (1146 aa).

Topologically, residues 1–143 (MADQIPLYPV…IKNQKYNVFT (143 aa)) are cytoplasmic. The chain crosses the membrane as a helical span at residues 144–164 (FIPGVLYEQFKFFLNLYFLVV). The Extracellular segment spans residues 165 to 172 (SCSQFVPA). A helical membrane pass occupies residues 173-193 (LKIGYLYTYWAPLGFVLAVTI). Over 194–381 (AREAIDEFRR…LDLELNQLTK (188 aa)) the chain is Cytoplasmic. A helical membrane pass occupies residues 382–402 (ALFLALVVLSVVMVTLQGFAG). Residues 403–407 (PWYRN) are Extracellular-facing. A helical transmembrane segment spans residues 408-427 (LFRFLLLFSYIIPISLRVNL). At 428-938 (DMGKAAYGWM…ALGQFVMHRG (511 aa)) the chain is on the cytoplasmic side. The active-site 4-aspartylphosphate intermediate is the D467. D467, K468, and T469 together coordinate ATP. A Mg(2+)-binding site is contributed by D467. T469 provides a ligand contact to Mg(2+). The segment covering 508 to 519 (VHSQPSGHNPSS) has biased composition (polar residues). Residues 508–535 (VHSQPSGHNPSSAPLRRSQSSTPKVKKS) form a disordered region. E590, F632, K637, K656, R685, T686, T765, G766, D767, R847, and K853 together coordinate ATP. D873 serves as a coordination point for Mg(2+). Positions 876 and 877 each coordinate ATP. D877 lines the Mg(2+) pocket. The helical transmembrane segment at 939 to 959 (LIISTMQAVFSSVFYFASVPL) threads the bilayer. The Extracellular segment spans residues 960 to 961 (YQ). The helical transmembrane segment at 962–982 (GFLMVGYATIYTMFPVFSLVL) threads the bilayer. Residues 983 to 1011 (DQDVKPEMAILYPELYKDLTKGRSLSFKT) lie on the Cytoplasmic side of the membrane. A helical membrane pass occupies residues 1012–1032 (FLIWVLISIYQGGILMYGALL). At 1033–1040 (LFEDEFVH) the chain is on the extracellular side. Residues 1041 to 1061 (VVAISFTALILTELLMVALTI) form a helical membrane-spanning segment. At 1062–1065 (RTWH) the chain is on the cytoplasmic side. Residues 1066 to 1086 (WLMVVAEFLSLGCYVASLAFL) form a helical membrane-spanning segment. Topologically, residues 1087–1105 (NEYFGIGRVSFGAFLDVAF) are extracellular. Residues 1106-1128 (ITTVTFLWKVSAITVVSCLPLYV) form a helical membrane-spanning segment. The Cytoplasmic segment spans residues 1129-1146 (LKYLKRKLSPPSYSKLSS).

This sequence belongs to the cation transport ATPase (P-type) (TC 3.A.3) family. Type IV subfamily. It depends on Mg(2+) as a cofactor. As to expression, found in most tissues except spleen and muscle. Most abundant in testis. Also detected in fetal tissues.

The protein localises to the golgi apparatus. It localises to the trans-Golgi network membrane. The catalysed reaction is ATP + H2O + phospholipidSide 1 = ADP + phosphate + phospholipidSide 2.. This chain is Probable phospholipid-transporting ATPase IIB (Atp9b), found in Mus musculus (Mouse).